We begin with the raw amino-acid sequence, 83 residues long: Conotoxin MiEr92 (83 aa).

The signal sequence occupies residues 1-22 (MKLTCVLIVIMLFLTVCPLITA). Positions 23 to 49 (DHSRDKQEHPAMRLKDRIRYLRRGKLT) are excised as a propeptide. Disulfide bonds link Cys-52/Cys-67, Cys-59/Cys-72, and Cys-66/Cys-81.

This sequence belongs to the conotoxin O1 superfamily. Expressed by the venom duct.

Its subcellular location is the secreted. The chain is Conotoxin MiEr92 from Conus miles (Soldier cone).